We begin with the raw amino-acid sequence, 547 residues long: Glucose-6-phosphate isomerase (547 aa).

The active-site Proton donor is the Glu355. Catalysis depends on residues His386 and Lys512.

This sequence belongs to the GPI family.

The protein localises to the cytoplasm. It carries out the reaction alpha-D-glucose 6-phosphate = beta-D-fructose 6-phosphate. Its pathway is carbohydrate biosynthesis; gluconeogenesis. It functions in the pathway carbohydrate degradation; glycolysis; D-glyceraldehyde 3-phosphate and glycerone phosphate from D-glucose: step 2/4. Catalyzes the reversible isomerization of glucose-6-phosphate to fructose-6-phosphate. The chain is Glucose-6-phosphate isomerase from Corynebacterium diphtheriae (strain ATCC 700971 / NCTC 13129 / Biotype gravis).